A 505-amino-acid polypeptide reads, in one-letter code: Forkhead box protein O4 (505 aa).

Over residues 1–10 (MDPGNENSAT) the composition is skewed to polar residues. Disordered regions lie at residues 1 to 100 (MDPG…RRNA) and 176 to 246 (SWWM…CSRN). The residue at position 32 (Thr32) is a Phosphothreonine; by PKB/AKT1. The segment covering 54-64 (LGEKVHTEGRS) has biased composition (basic and acidic residues). The segment at residues 100 to 188 (AWGNQSYAEL…MLNPEGGKSG (89 aa)) is a DNA-binding region (fork-head). The residue at position 197 (Ser197) is a Phosphoserine; by PKB/AKT1. Over residues 205–216 (LRGRSKAPKKKP) the composition is skewed to basic residues. Ser262 carries the post-translational modification Phosphoserine; by PKB/AKT1.

As to quaternary structure, interacts with CREBBP/CBP, CTNNB1, MYOCD, SIRT1, SRF and YWHAZ. Acetylated by CREBBP/CBP and deacetylated by SIRT1. Binding of YWHAZ inhibits DNA-binding. Interacts with USP7; the interaction is enhanced in presence of hydrogen peroxide and occurs independently of TP53. Interacts with NLK, and this inhibits monoubiquitination and transcriptional activity. Interacts with FOXK1; the interaction inhibits MEF2C transactivation activity. Acetylation by CREBBP/CBP, which is induced by peroxidase stress, inhibits transcriptional activity. Deacetylation by SIRT1 is NAD-dependent and stimulates transcriptional activity. Post-translationally, phosphorylation by PKB/AKT1 inhibits transcriptional activity and is responsible for cytoplasmic localization. May be phosphorylated at multiple sites by NLK. In terms of processing, monoubiquitinated; monoubiquitination is induced by oxidative stress and reduced by deacetylase inhibitors; results in its relocalization to the nucleus and its increased transcriptional activity. Deubiquitinated by USP7; deubiquitination is induced by oxidative stress; enhances its interaction with USP7 and consequently, deubiquitination; increases its translocation to the cytoplasm and inhibits its transcriptional activity. Hydrogene-peroxide-induced ubiquitination and USP7-mediated deubiquitination have no major effect on its protein stability. As to expression, heart, brain, placenta, lung, liver, skeletal muscle, kidney and pancreas. Isoform zeta is most abundant in the liver, kidney, and pancreas.

It localises to the cytoplasm. The protein resides in the nucleus. In terms of biological role, transcription factor involved in the regulation of the insulin signaling pathway. Binds to insulin-response elements (IREs) and can activate transcription of IGFBP1. Down-regulates expression of HIF1A and suppresses hypoxia-induced transcriptional activation of HIF1A-modulated genes. Also involved in negative regulation of the cell cycle. Involved in increased proteasome activity in embryonic stem cells (ESCs) by activating expression of PSMD11 in ESCs, leading to enhanced assembly of the 26S proteasome, followed by higher proteasome activity. The polypeptide is Forkhead box protein O4 (FOXO4) (Homo sapiens (Human)).